The primary structure comprises 167 residues: UPF0179 protein Pisl_0688 (167 aa).

Belongs to the UPF0179 family.

This chain is UPF0179 protein Pisl_0688, found in Pyrobaculum islandicum (strain DSM 4184 / JCM 9189 / GEO3).